Reading from the N-terminus, the 333-residue chain is Foldase protein PrsA (333 aa).

An N-terminal signal peptide occupies residues 1–22 (MKSAKQIATALLVGMFTFSAVG). The N-palmitoyl cysteine moiety is linked to residue Cys23. Cys23 carries S-diacylglycerol cysteine lipidation. The region spanning 192–283 (PNTVHLAHIL…FGWHVIKCIK (92 aa)) is the PpiC domain.

It belongs to the PrsA family.

It localises to the cell membrane. It catalyses the reaction [protein]-peptidylproline (omega=180) = [protein]-peptidylproline (omega=0). Its function is as follows. Plays a major role in protein secretion by helping the post-translocational extracellular folding of several secreted proteins. The protein is Foldase protein PrsA of Clostridium acetobutylicum (strain ATCC 824 / DSM 792 / JCM 1419 / IAM 19013 / LMG 5710 / NBRC 13948 / NRRL B-527 / VKM B-1787 / 2291 / W).